A 270-amino-acid polypeptide reads, in one-letter code: Acyl-[acyl-carrier-protein]--UDP-N-acetylglucosamine O-acyltransferase (270 aa).

Residues 69 to 72 (QDLK), H121, H140, and Q157 each bind substrate.

This sequence belongs to the transferase hexapeptide repeat family. LpxA subfamily. Homotrimer.

The protein resides in the cytoplasm. It catalyses the reaction a (3R)-hydroxyacyl-[ACP] + UDP-N-acetyl-alpha-D-glucosamine = a UDP-3-O-[(3R)-3-hydroxyacyl]-N-acetyl-alpha-D-glucosamine + holo-[ACP]. The protein operates within glycolipid biosynthesis; lipid IV(A) biosynthesis; lipid IV(A) from (3R)-3-hydroxytetradecanoyl-[acyl-carrier-protein] and UDP-N-acetyl-alpha-D-glucosamine: step 1/6. In terms of biological role, involved in the biosynthesis of lipid A, a phosphorylated glycolipid that anchors the lipopolysaccharide to the outer membrane of the cell. The protein is Acyl-[acyl-carrier-protein]--UDP-N-acetylglucosamine O-acyltransferase of Helicobacter pylori (strain ATCC 700392 / 26695) (Campylobacter pylori).